Here is a 927-residue protein sequence, read N- to C-terminus: Valine--tRNA ligase (927 aa).

The short motif at Pro-45–His-55 is the 'HIGH' region element. The 'KMSKS' region motif lies at Lys-571 to Ser-575. Residue Lys-574 coordinates ATP. A coiled-coil region spans residues Ser-856–Ala-917.

It belongs to the class-I aminoacyl-tRNA synthetase family. ValS type 1 subfamily. Monomer.

It localises to the cytoplasm. The enzyme catalyses tRNA(Val) + L-valine + ATP = L-valyl-tRNA(Val) + AMP + diphosphate. In terms of biological role, catalyzes the attachment of valine to tRNA(Val). As ValRS can inadvertently accommodate and process structurally similar amino acids such as threonine, to avoid such errors, it has a 'posttransfer' editing activity that hydrolyzes mischarged Thr-tRNA(Val) in a tRNA-dependent manner. The chain is Valine--tRNA ligase from Mesorhizobium japonicum (strain LMG 29417 / CECT 9101 / MAFF 303099) (Mesorhizobium loti (strain MAFF 303099)).